A 344-amino-acid chain; its full sequence is Phenylalanine--tRNA ligase alpha subunit (344 aa).

Position 255 (E255) interacts with Mg(2+).

This sequence belongs to the class-II aminoacyl-tRNA synthetase family. Phe-tRNA synthetase alpha subunit type 1 subfamily. Tetramer of two alpha and two beta subunits. Mg(2+) is required as a cofactor.

The protein localises to the cytoplasm. It carries out the reaction tRNA(Phe) + L-phenylalanine + ATP = L-phenylalanyl-tRNA(Phe) + AMP + diphosphate + H(+). The protein is Phenylalanine--tRNA ligase alpha subunit of Phocaeicola vulgatus (strain ATCC 8482 / DSM 1447 / JCM 5826 / CCUG 4940 / NBRC 14291 / NCTC 11154) (Bacteroides vulgatus).